The sequence spans 93 residues: Small ribosomal subunit protein uS19 (93 aa).

The protein belongs to the universal ribosomal protein uS19 family.

Its function is as follows. Protein S19 forms a complex with S13 that binds strongly to the 16S ribosomal RNA. The sequence is that of Small ribosomal subunit protein uS19 from Wolinella succinogenes (strain ATCC 29543 / DSM 1740 / CCUG 13145 / JCM 31913 / LMG 7466 / NCTC 11488 / FDC 602W) (Vibrio succinogenes).